The primary structure comprises 337 residues: tRNA N6-adenosine threonylcarbamoyltransferase (337 aa).

Fe cation is bound by residues histidine 111 and histidine 115. Substrate-binding positions include 134 to 138, aspartate 167, glycine 180, and asparagine 272; that span reads LVSGG. Aspartate 300 contacts Fe cation.

Belongs to the KAE1 / TsaD family. The cofactor is Fe(2+).

The protein localises to the cytoplasm. The enzyme catalyses L-threonylcarbamoyladenylate + adenosine(37) in tRNA = N(6)-L-threonylcarbamoyladenosine(37) in tRNA + AMP + H(+). Required for the formation of a threonylcarbamoyl group on adenosine at position 37 (t(6)A37) in tRNAs that read codons beginning with adenine. Is involved in the transfer of the threonylcarbamoyl moiety of threonylcarbamoyl-AMP (TC-AMP) to the N6 group of A37, together with TsaE and TsaB. TsaD likely plays a direct catalytic role in this reaction. The polypeptide is tRNA N6-adenosine threonylcarbamoyltransferase (Aeromonas salmonicida (strain A449)).